A 132-amino-acid polypeptide reads, in one-letter code: Small ribosomal subunit protein uS8c (132 aa).

It belongs to the universal ribosomal protein uS8 family. As to quaternary structure, part of the 30S ribosomal subunit.

Its subcellular location is the plastid. It is found in the chloroplast. Functionally, one of the primary rRNA binding proteins, it binds directly to 16S rRNA central domain where it helps coordinate assembly of the platform of the 30S subunit. In Thalassiosira pseudonana (Marine diatom), this protein is Small ribosomal subunit protein uS8c (rps8).